A 493-amino-acid polypeptide reads, in one-letter code: Amidophosphoribosyltransferase (493 aa).

Residues 1–26 (MIPTQPLTADLDCDLGLERPDRPEEA) constitute a propeptide that is removed on maturation. The active-site Nucleophile is cysteine 27. The 226-residue stretch at 27 to 252 (CGVFALYAPG…PGEMVRITDA (226 aa)) folds into the Glutamine amidotransferase type-2 domain. Cysteine 268 serves as a coordination point for [4Fe-4S] cluster. The Mg(2+) site is built by serine 315, aspartate 377, and aspartate 378. The [4Fe-4S] cluster site is built by cysteine 414, cysteine 465, and cysteine 468.

In the C-terminal section; belongs to the purine/pyrimidine phosphoribosyltransferase family. It depends on Mg(2+) as a cofactor. [4Fe-4S] cluster is required as a cofactor.

It carries out the reaction 5-phospho-beta-D-ribosylamine + L-glutamate + diphosphate = 5-phospho-alpha-D-ribose 1-diphosphate + L-glutamine + H2O. Its pathway is purine metabolism; IMP biosynthesis via de novo pathway; N(1)-(5-phospho-D-ribosyl)glycinamide from 5-phospho-alpha-D-ribose 1-diphosphate: step 1/2. In terms of biological role, catalyzes the formation of phosphoribosylamine from phosphoribosylpyrophosphate (PRPP) and glutamine. The sequence is that of Amidophosphoribosyltransferase from Synechococcus elongatus (strain ATCC 33912 / PCC 7942 / FACHB-805) (Anacystis nidulans R2).